A 148-amino-acid polypeptide reads, in one-letter code: UPF0756 membrane protein YeaL (148 aa).

Transmembrane regions (helical) follow at residues 14–34 (ALGF…LIIV), 51–71 (LSIG…SGTL), 86–106 (LVAI…VTLM), and 121–141 (VLGV…AGLV).

Belongs to the UPF0756 family.

The protein resides in the cell membrane. The chain is UPF0756 membrane protein YeaL from Escherichia coli (strain B / REL606).